The primary structure comprises 405 residues: ATP phosphoribosyltransferase regulatory subunit (405 aa).

The protein belongs to the class-II aminoacyl-tRNA synthetase family. HisZ subfamily. As to quaternary structure, heteromultimer composed of HisG and HisZ subunits.

The protein resides in the cytoplasm. The protein operates within amino-acid biosynthesis; L-histidine biosynthesis; L-histidine from 5-phospho-alpha-D-ribose 1-diphosphate: step 1/9. Required for the first step of histidine biosynthesis. May allow the feedback regulation of ATP phosphoribosyltransferase activity by histidine. This Oceanobacillus iheyensis (strain DSM 14371 / CIP 107618 / JCM 11309 / KCTC 3954 / HTE831) protein is ATP phosphoribosyltransferase regulatory subunit.